The primary structure comprises 258 residues: Cytosolic Fe-S cluster assembly factor Nubp2 homolog (258 aa).

Gly14–Ser21 contacts ATP. Residues Cys188 and Cys191 each coordinate [4Fe-4S] cluster.

Belongs to the Mrp/NBP35 ATP-binding proteins family. NUBP2/CFD1 subfamily. In terms of assembly, heterotetramer of 2 Nubp1 and 2 Nubp2 chains. The cofactor is [4Fe-4S] cluster.

It is found in the cytoplasm. In terms of biological role, component of the cytosolic iron-sulfur (Fe/S) protein assembly (CIA) machinery. Required for maturation of extramitochondrial Fe-S proteins. The Nubp1-Nubp2 heterotetramer forms a Fe-S scaffold complex, mediating the de novo assembly of an Fe-S cluster and its transfer to target apoproteins. The sequence is that of Cytosolic Fe-S cluster assembly factor Nubp2 homolog from Drosophila pseudoobscura pseudoobscura (Fruit fly).